The chain runs to 40 residues: Natriuretic peptide HsNP-b (40 aa).

The propeptide occupies 1 to 8; sequence SGSKTAKI. Residues 1 to 40 form a disordered region; that stretch reads SGSKTAKIGDGCFGVPIDHIGSTTDLGCGRPRPKPTPRGS. C12 and C28 form a disulfide bridge. The segment covering 31 to 40 has biased composition (basic residues); it reads PRPKPTPRGS.

Belongs to the natriuretic peptide family. In terms of tissue distribution, expressed by the venom gland.

The protein resides in the secreted. Its function is as follows. Snake venom natriuretic peptide that targets both NPR1 and NPR2. Exhibits hypotensive and vasodepressor activities. The chain is Natriuretic peptide HsNP-b from Hoplocephalus stephensii (Stephens's banded snake).